Here is a 761-residue protein sequence, read N- to C-terminus: T-box protein 1 (761 aa).

2 disordered regions span residues 1–85 (MLGR…QPLT) and 167–210 (QTDP…CSSP). 2 stretches are compositionally biased toward polar residues: residues 37–61 (DLQNTPARSNASTDYSTQSLSNQAG) and 167–179 (QTDPANPSGFPQA). 2 stretches are compositionally biased toward low complexity: residues 180–191 (SPSDLSTTSSQS) and 198–210 (SSPSVSSSTCSSP). Residues 287 to 456 (LWRKFHEHRT…HNPFAKGFRD (170 aa)) constitute a DNA-binding region (T-box). The segment covering 496 to 510 (TTGFPCQTNPTQRSN) has biased composition (polar residues). Disordered stretches follow at residues 496–515 (TTGFPCQTNPTQRSNGQHEG), 545–612 (SGDA…TPAH), and 637–687 (VCSS…LLTT). The segment covering 600–612 (GCERSNEKHTPAH) has biased composition (basic and acidic residues). Over residues 637-646 (VCSSDNSNPD) the composition is skewed to polar residues. The segment covering 656 to 687 (SPAGSGSPSVTSGTSLFTSGSSAAPSPPLLTT) has biased composition (low complexity).

It localises to the nucleus. In terms of biological role, probable transcriptional regulator involved in developmental processes. The protein is T-box protein 1 (tbr1) of Patiria pectinifera (Starfish).